We begin with the raw amino-acid sequence, 87 residues long: U3-theraphotoxin-Hhn1a 6 (87 aa).

A signal peptide spans 1–24 (MVNMKASMFLTFAGLVLLFVVCYA). The propeptide occupies 25–52 (SESEKKEFPKEMLSSIFAVDNDFKQEER). Cystine bridges form between C54–C67, C61–C72, and C66–C79.

The protein belongs to the neurotoxin 10 (Hwtx-1) family. 51 (Hntx-8) subfamily. Hntx-8 sub-subfamily. Expressed by the venom gland.

The protein resides in the secreted. Ion channel inhibitor. In Cyriopagopus hainanus (Chinese bird spider), this protein is U3-theraphotoxin-Hhn1a 6.